The chain runs to 274 residues: MDLLLLLKAAIMGIVEGITEFLPISSTGHLILASELMNFWTKEKSAVFVVAIQMGAIAAVIYEYWSRLWGAATGMVTGEEKGRHLAISLILASIPIVLVGLSFGQTVKDLLFNDVAVAIGLIVGGVIIMWIEKNPPKVNAVEVENIGLKQAIWIGLIQVLSLIPGTSRSGATIIGAMFLGVSRKAATEFSFFLGIPVIIGAGLLDLYQSHEVLQTSFDWSVLGVGILVSFVSALLLIRALVAYVAKRDFMVFAWYRIVSGLLILLFAYTGWTIW.

8 consecutive transmembrane segments (helical) span residues 4-24, 45-65, 84-104, 111-131, 146-166, 186-206, 217-237, and 249-269; these read LLLLKAAIMGIVEGITEFLPI, SAVFVVAIQMGAIAAVIYEYW, HLAISLILASIPIVLVGLSFG, LFNDVAVAIGLIVGGVIIMWI, IGLKQAIWIGLIQVLSLIPGT, ATEFSFFLGIPVIIGAGLLDL, FDWSVLGVGILVSFVSALLLI, and FMVFAWYRIVSGLLILLFAYT.

This sequence belongs to the UppP family.

The protein resides in the cell inner membrane. The enzyme catalyses di-trans,octa-cis-undecaprenyl diphosphate + H2O = di-trans,octa-cis-undecaprenyl phosphate + phosphate + H(+). Its function is as follows. Catalyzes the dephosphorylation of undecaprenyl diphosphate (UPP). Confers resistance to bacitracin. The chain is Undecaprenyl-diphosphatase 1 from Acinetobacter baylyi (strain ATCC 33305 / BD413 / ADP1).